The primary structure comprises 418 residues: Serine--tRNA ligase (418 aa).

T227–E229 contributes to the L-serine binding site. ATP contacts are provided by residues R258–E260 and V274. E281 is an L-serine binding site. E345–S348 is a binding site for ATP. T380 is a binding site for L-serine.

It belongs to the class-II aminoacyl-tRNA synthetase family. Type-1 seryl-tRNA synthetase subfamily. Homodimer. The tRNA molecule binds across the dimer.

It localises to the cytoplasm. It carries out the reaction tRNA(Ser) + L-serine + ATP = L-seryl-tRNA(Ser) + AMP + diphosphate + H(+). It catalyses the reaction tRNA(Sec) + L-serine + ATP = L-seryl-tRNA(Sec) + AMP + diphosphate + H(+). The protein operates within aminoacyl-tRNA biosynthesis; selenocysteinyl-tRNA(Sec) biosynthesis; L-seryl-tRNA(Sec) from L-serine and tRNA(Sec): step 1/1. In terms of biological role, catalyzes the attachment of serine to tRNA(Ser). Is also able to aminoacylate tRNA(Sec) with serine, to form the misacylated tRNA L-seryl-tRNA(Sec), which will be further converted into selenocysteinyl-tRNA(Sec). The chain is Serine--tRNA ligase from Rhodococcus opacus (strain B4).